An 81-amino-acid polypeptide reads, in one-letter code: Insulin-like growth factor 1 (81 aa).

A propeptide spanning residues 1–4 is cleaved from the precursor; sequence FASA. The b stretch occupies residues 5-33; the sequence is GPETLCGAELVDALQFVCGDRGFYFNKPT. 3 disulfides stabilise this stretch: C10-C52, C22-C65, and C51-C56. Residues 34–45 are c; the sequence is GYGSSSRRAPQT. The interval 46-66 is a; the sequence is GIVDECCFRSCDLRRLEMYCA. The tract at residues 67-74 is d; it reads PLKPAKAA. Residues 75–81 constitute a propeptide, e peptide; that stretch reads RSVRAQR.

It belongs to the insulin family. As to quaternary structure, forms a ternary complex with IGFR1 and ITGAV:ITGB3. Forms a ternary complex with IGFR1 and ITGA6:ITGB4.

The protein resides in the secreted. Functionally, the insulin-like growth factors, isolated from plasma, are structurally and functionally related to insulin but have a much higher growth-promoting activity. May be a physiological regulator of [1-14C]-2-deoxy-D-glucose (2DG) transport and glycogen synthesis in osteoblasts. Stimulates glucose transport in bone-derived osteoblastic (PyMS) cells and is effective at much lower concentrations than insulin, not only regarding glycogen and DNA synthesis but also with regard to enhancing glucose uptake. May play a role in synapse maturation. Ca(2+)-dependent exocytosis of IGF1 is required for sensory perception of smell in the olfactory bulb. Acts as a ligand for IGF1R. Binds to the alpha subunit of IGF1R, leading to the activation of the intrinsic tyrosine kinase activity which autophosphorylates tyrosine residues in the beta subunit thus initiating a cascade of down-stream signaling events leading to activation of the PI3K-AKT/PKB and the Ras-MAPK pathways. Binds to integrins ITGAV:ITGB3 and ITGA6:ITGB4. Its binding to integrins and subsequent ternary complex formation with integrins and IGFR1 are essential for IGF1 signaling. Induces the phosphorylation and activation of IGFR1, MAPK3/ERK1, MAPK1/ERK2 and AKT1. As part of the MAPK/ERK signaling pathway, acts as a negative regulator of apoptosis in cardiomyocytes via promotion of STUB1/CHIP-mediated ubiquitination and degradation of ICER-type isoforms of CREM. In Suncus murinus (Asian house shrew), this protein is Insulin-like growth factor 1.